A 418-amino-acid polypeptide reads, in one-letter code: Nisin biosynthesis protein NisC (418 aa).

The protein to B.subtilis SpaC and S.epidermidis EpiC.

Its function is as follows. Could be implicated in the processing or the export process of the nisin lantibiotic. This Lactococcus lactis subsp. lactis (Streptococcus lactis) protein is Nisin biosynthesis protein NisC (nisC).